Reading from the N-terminus, the 341-residue chain is Mitochondrial dimethyladenosine transferase 1 (341 aa).

A mitochondrion-targeting transit peptide spans 1–27 (MASSRTLGTFRLPPLPTIREIIKLFRL). L38, G63, E85, K86, D111, V112, and N141 together coordinate S-adenosyl-L-methionine.

The protein belongs to the class I-like SAM-binding methyltransferase superfamily. rRNA adenine N(6)-methyltransferase family. KsgA subfamily. In terms of assembly, interacts with mitochondrial RNA polymerase POLRMT. Interacts with TFAM. Bound to the maturing mtSSU until the late stages of assembly.

Its subcellular location is the mitochondrion. It carries out the reaction adenosine(N)/adenosine(N+1) in rRNA + 4 S-adenosyl-L-methionine = N(6)-dimethyladenosine(N)/N(6)-dimethyladenosine(N+1) in rRNA + 4 S-adenosyl-L-homocysteine + 4 H(+). In terms of biological role, mitochondrial methyltransferase which uses S-adenosyl methionine to dimethylate two highly conserved adjacent adenosine residues (A1583 and A1584) within the loop of helix 45 at the 3-prime end of 12S rRNA, thereby regulating the assembly or stability of the small subunit of the mitochondrial ribosome. Also required for basal transcription of mitochondrial DNA, probably via its interaction with POLRMT and TFAM. Stimulates transcription independently of the methyltransferase activity. This is Mitochondrial dimethyladenosine transferase 1 (TFB1M) from Bos taurus (Bovine).